We begin with the raw amino-acid sequence, 384 residues long: Protein RecA (384 aa).

76–83 (GPESSGKT) contributes to the ATP binding site. Residues 346-365 (QGSAEPEKAAKPEKVEKADK) form a disordered region. Positions 350-365 (EPEKAAKPEKVEKADK) are enriched in basic and acidic residues.

The protein belongs to the RecA family.

The protein resides in the cytoplasm. Functionally, can catalyze the hydrolysis of ATP in the presence of single-stranded DNA, the ATP-dependent uptake of single-stranded DNA by duplex DNA, and the ATP-dependent hybridization of homologous single-stranded DNAs. It interacts with LexA causing its activation and leading to its autocatalytic cleavage. This is Protein RecA from Polaromonas naphthalenivorans (strain CJ2).